Here is a 186-residue protein sequence, read N- to C-terminus: Ribosome-recycling factor (186 aa).

This sequence belongs to the RRF family.

It is found in the cytoplasm. Responsible for the release of ribosomes from messenger RNA at the termination of protein biosynthesis. May increase the efficiency of translation by recycling ribosomes from one round of translation to another. The chain is Ribosome-recycling factor from Bacteroides fragilis (strain ATCC 25285 / DSM 2151 / CCUG 4856 / JCM 11019 / LMG 10263 / NCTC 9343 / Onslow / VPI 2553 / EN-2).